Here is a 321-residue protein sequence, read N- to C-terminus: Cysteine and histidine-rich domain-containing protein 1 (321 aa).

The Zn(2+) site is built by Cys-9, Cys-14, Cys-28, His-31, Cys-46, Cys-47, Cys-63, His-68, Cys-152, Cys-157, Cys-170, His-173, Cys-188, Cys-189, Cys-205, and His-210. CHORD domains follow at residues 9-68 and 152-210; these read CYHK…RGKH and CRNN…SGEH. The CS domain occupies 218–308; the sequence is VSKFREDWFS…KHGTGWPRLK (91 aa).

In terms of biological role, regulates centrosome duplication. Controls the secretion of the tyrosine kinase receptor let-23/EGFR from the endoplasmic reticulum and is required for the localization of let-23/EGFR to the plasma membrane of vulval precursor cells. It thus plays a role in positively regulating let/EGFR signaling, and anchor cell and vulval precursor cell alignment. Plays a role in vulval development and morphogenesis. The sequence is that of Cysteine and histidine-rich domain-containing protein 1 from Caenorhabditis elegans.